The primary structure comprises 189 residues: Elongation factor P (189 aa).

Lys-34 is subject to N6-(3,6-diaminohexanoyl)-5-hydroxylysine.

It belongs to the elongation factor P family. Post-translationally, may be beta-lysylated on the epsilon-amino group of Lys-34 by the combined action of EpmA and EpmB, and then hydroxylated on the C5 position of the same residue by EpmC (if this protein is present). Lysylation is critical for the stimulatory effect of EF-P on peptide-bond formation. The lysylation moiety may extend toward the peptidyltransferase center and stabilize the terminal 3-CCA end of the tRNA. Hydroxylation of the C5 position on Lys-34 may allow additional potential stabilizing hydrogen-bond interactions with the P-tRNA.

Its subcellular location is the cytoplasm. The protein operates within protein biosynthesis; polypeptide chain elongation. In terms of biological role, involved in peptide bond synthesis. Alleviates ribosome stalling that occurs when 3 or more consecutive Pro residues or the sequence PPG is present in a protein, possibly by augmenting the peptidyl transferase activity of the ribosome. Modification of Lys-34 is required for alleviation. This chain is Elongation factor P, found in Acinetobacter baumannii (strain AB307-0294).